The following is a 229-amino-acid chain: UPF0488 protein C8orf33 homolog (229 aa).

Ala2 carries the N-acetylalanine modification. Position 27 is an omega-N-methylarginine (Arg27). The disordered stretch occupies residues 55–101; that stretch reads SRAHPLGDEGGTASKKQNKKKKTRNRASVANGGEKASEKLAPEEVPL. Positions 70-79 are enriched in basic residues; sequence KQNKKKKTRN. Ser82 bears the Phosphoserine mark.

Belongs to the UPF0488 family.

The polypeptide is UPF0488 protein C8orf33 homolog (Pongo abelii (Sumatran orangutan)).